The following is a 633-amino-acid chain: Beta-myrcene synthase TPS15CT (633 aa).

The N-terminal 55 residues, 1-55, are a transit peptide targeting the chloroplast; that stretch reads MHCMAVHQFSPSIVSSLPTISTYNNNHFCRFFTPKTSISPISKTKSKSSTCYPIQ. The (2E)-geranyl diphosphate site is built by Arg344, Asp381, Asp385, Arg525, and Asp528. The Mg(2+) site is built by Asp381 and Asp385. The short motif at 381-385 is the DDXXD motif element; sequence DDIYD. Mg(2+)-binding residues include Asp528, Thr532, and Glu536.

This sequence belongs to the terpene synthase family. Tpsb subfamily. It depends on Mg(2+) as a cofactor. Mn(2+) serves as cofactor.

It localises to the plastid. It is found in the chloroplast. The catalysed reaction is (2E)-geranyl diphosphate = beta-myrcene + diphosphate. It participates in secondary metabolite biosynthesis; terpenoid biosynthesis. Functionally, involved in monoterpene (C10) olefins biosynthesis, constituants of cannabinoids and terpenoids-rich resins. Catalyzes strictly the conversion of (2E)-geranyl diphosphate to beta-myrcene. The polypeptide is Beta-myrcene synthase TPS15CT (Cannabis sativa (Hemp)).